Consider the following 341-residue polypeptide: Methionine import ATP-binding protein MetN (341 aa).

An ABC transporter domain is found at 9–247; sequence ISVQDVSKKL…SENSITNELF (239 aa). 41-48 is a binding site for ATP; the sequence is GHSGSGKT.

It belongs to the ABC transporter superfamily. Methionine importer (TC 3.A.1.24) family. In terms of assembly, the complex is composed of two ATP-binding proteins (MetN), two transmembrane proteins (MetI) and a solute-binding protein (MetQ).

The protein resides in the cell inner membrane. The catalysed reaction is L-methionine(out) + ATP + H2O = L-methionine(in) + ADP + phosphate + H(+). The enzyme catalyses D-methionine(out) + ATP + H2O = D-methionine(in) + ADP + phosphate + H(+). In terms of biological role, part of the ABC transporter complex MetNIQ involved in methionine import. Responsible for energy coupling to the transport system. The polypeptide is Methionine import ATP-binding protein MetN (Chlamydia pneumoniae (Chlamydophila pneumoniae)).